Consider the following 152-residue polypeptide: 3-hydroxyacyl-[acyl-carrier-protein] dehydratase FabZ (152 aa).

His58 is a catalytic residue.

This sequence belongs to the thioester dehydratase family. FabZ subfamily.

The protein resides in the cytoplasm. The catalysed reaction is a (3R)-hydroxyacyl-[ACP] = a (2E)-enoyl-[ACP] + H2O. Functionally, involved in unsaturated fatty acids biosynthesis. Catalyzes the dehydration of short chain beta-hydroxyacyl-ACPs and long chain saturated and unsaturated beta-hydroxyacyl-ACPs. In Prochlorococcus marinus (strain MIT 9515), this protein is 3-hydroxyacyl-[acyl-carrier-protein] dehydratase FabZ.